The sequence spans 1032 residues: tRNA wybutosine-synthesizing protein 4 (1032 aa).

Residues Arg-69, Gly-95, Asp-122, 169-170, and Glu-196 each bind S-adenosyl-L-methionine; that span reads DL. The disordered stretch occupies residues 702–726; sequence ESVEPNKSQSEKATSKPSAQSQNEP. Residues 716-725 are compositionally biased toward polar residues; that stretch reads SKPSAQSQNE. The JmjC domain occupies 833–988; that stretch reads PTKLPANLAV…AAGRDVYGNR (156 aa).

Belongs to the methyltransferase superfamily. LCMT family.

It carries out the reaction 7-[(3S)-3-amino-3-carboxypropyl]wyosine(37) in tRNA(Phe) + S-adenosyl-L-methionine = 7-[(3S)-(3-amino-3-methoxycarbonyl)propyl]wyosine(37) in tRNA(Phe) + S-adenosyl-L-homocysteine. The catalysed reaction is 7-[(3S)-(3-amino-3-methoxycarbonyl)propyl]wyosine(37) in tRNA(Phe) + S-adenosyl-L-methionine + CO2 = wybutosine(37) in tRNA(Phe) + S-adenosyl-L-homocysteine + 2 H(+). It functions in the pathway tRNA modification; wybutosine-tRNA(Phe) biosynthesis. In terms of biological role, probable S-adenosyl-L-methionine-dependent methyltransferase that acts as a component of the wybutosine biosynthesis pathway. Wybutosine is a hyper modified guanosine with a tricyclic base found at the 3'-position adjacent to the anticodon of eukaryotic phenylalanine tRNA. May methylate the carboxyl group of leucine residues to form alpha-leucine ester residues. The protein is tRNA wybutosine-synthesizing protein 4 (ppm2) of Aspergillus oryzae (strain ATCC 42149 / RIB 40) (Yellow koji mold).